We begin with the raw amino-acid sequence, 475 residues long: Aspartyl/glutamyl-tRNA(Asn/Gln) amidotransferase subunit B (475 aa).

This sequence belongs to the GatB/GatE family. GatB subfamily. In terms of assembly, heterotrimer of A, B and C subunits.

The enzyme catalyses L-glutamyl-tRNA(Gln) + L-glutamine + ATP + H2O = L-glutaminyl-tRNA(Gln) + L-glutamate + ADP + phosphate + H(+). It carries out the reaction L-aspartyl-tRNA(Asn) + L-glutamine + ATP + H2O = L-asparaginyl-tRNA(Asn) + L-glutamate + ADP + phosphate + 2 H(+). Its function is as follows. Allows the formation of correctly charged Asn-tRNA(Asn) or Gln-tRNA(Gln) through the transamidation of misacylated Asp-tRNA(Asn) or Glu-tRNA(Gln) in organisms which lack either or both of asparaginyl-tRNA or glutaminyl-tRNA synthetases. The reaction takes place in the presence of glutamine and ATP through an activated phospho-Asp-tRNA(Asn) or phospho-Glu-tRNA(Gln). This chain is Aspartyl/glutamyl-tRNA(Asn/Gln) amidotransferase subunit B, found in Chlorobium phaeobacteroides (strain DSM 266 / SMG 266 / 2430).